The primary structure comprises 195 residues: FMN-dependent NADH:quinone oxidoreductase (195 aa).

FMN contacts are provided by residues serine 10, serine 16–serine 18, and methionine 91–phenylalanine 94.

This sequence belongs to the azoreductase type 1 family. As to quaternary structure, homodimer. It depends on FMN as a cofactor.

It catalyses the reaction 2 a quinone + NADH + H(+) = 2 a 1,4-benzosemiquinone + NAD(+). The enzyme catalyses N,N-dimethyl-1,4-phenylenediamine + anthranilate + 2 NAD(+) = 2-(4-dimethylaminophenyl)diazenylbenzoate + 2 NADH + 2 H(+). Its function is as follows. Quinone reductase that provides resistance to thiol-specific stress caused by electrophilic quinones. Also exhibits azoreductase activity. Catalyzes the reductive cleavage of the azo bond in aromatic azo compounds to the corresponding amines. The polypeptide is FMN-dependent NADH:quinone oxidoreductase (Aeromonas salmonicida (strain A449)).